Consider the following 249-residue polypeptide: MSLEDPFFVVRGEVQKAVNTARGLYQRWCELLQESAAVGREELDWTTNELRNGLRSIEWDLEDLEETIGIVEANPGKFKLPAGDLQERKVFVERMREAVQEMKDHMVSPTAVAFLERNNREILAGKPAAQKSPSDLLDASAVSATSRYIEEQQATQQLIMDEQDQQLEMVSGSIQVLKHMSGRVGEELDEQGIMLDAFAQEMDHTQSRMDGVLRKLAKVSHMTSDRRQWCAIAVLVGVLLLVLILLFSL.

N-acetylserine is present on Ser-2. Over 2–228 the chain is Cytoplasmic; that stretch reads SLEDPFFVVR…VSHMTSDRRQ (227 aa). The stretch at 41–69 forms a coiled coil; it reads EELDWTTNELRNGLRSIEWDLEDLEETIG. Residue Ser-108 is modified to Phosphoserine. Residue Thr-110 is modified to Phosphothreonine. A phosphoserine mark is found at Ser-134, Ser-140, and Ser-143. The region spanning 157-219 is the t-SNARE coiled-coil homology domain; the sequence is QLIMDEQDQQ…DGVLRKLAKV (63 aa). A helical; Anchor for type IV membrane protein membrane pass occupies residues 229-249; the sequence is WCAIAVLVGVLLLVLILLFSL.

The protein belongs to the syntaxin family. As to quaternary structure, interacts with VPS52. As to expression, expressed at high levels in heart, skeletal muscle and pancreas.

It is found in the golgi apparatus membrane. SNARE involved in vesicular transport from the late endosomes to the trans-Golgi network. This Homo sapiens (Human) protein is Syntaxin-10 (STX10).